The chain runs to 500 residues: Kynurenine 3-monooxygenase acdD (500 aa).

FAD contacts are provided by residues valine 17 and 36–38; that span reads ELR. Asparagine 50 is a glycosylation site (N-linked (GlcNAc...) asparagine). Alanine 58 is a binding site for FAD. Arginine 89 and tyrosine 106 together coordinate L-kynurenine. 2 residues coordinate FAD: arginine 118 and leucine 143. Asparagine 163 is a glycosylation site (N-linked (GlcNAc...) asparagine). FAD is bound by residues aspartate 321 and 332-335; that span reads QGLN. L-kynurenine-binding residues include asparagine 392 and tyrosine 428. The helical transmembrane segment at 451–471 threads the bilayer; sequence LLLYGSISAIISSAAIVGVLA.

This sequence belongs to the aromatic-ring hydroxylase family. KMO subfamily. Requires FAD as cofactor.

The protein resides in the mitochondrion outer membrane. It catalyses the reaction L-kynurenine + NADPH + O2 + H(+) = 3-hydroxy-L-kynurenine + NADP(+) + H2O. It participates in secondary metabolite biosynthesis. The protein operates within cofactor biosynthesis; NAD(+) biosynthesis; quinolinate from L-kynurenine: step 1/3. In terms of biological role, indoleamine 2,3-dioxygenase; part of the gene cluster that mediates the biosynthesis of aspcandine, a pyrrolobenzazepine alkaloid. Initially, the indoleamine 2,3-dioxygenase acdA accepts L-tryptophan and performs the oxidative opening of the indole ring to yield N'-formyl-L-kynurenine, which undergoes the spontaneous deformylation reaction to provide L-kynurenine. The kynurenine 3-monooxygenase acdD then hydroxylates L-kynurenine to afford 3-hydroxy-L-kynurenine. 3-hydroxy-L-kynurenine is activated by the A domain of the NRPS-PKS acdB and subsequently loaded onto the enzyme. The KS domain conducts the decarboxylative condensation of the 3-hydroxy-L-kynurenyl and malonyl moieties, and subsequent nucleophilic attacks by the two amino groups would occur nonenzymatically at two distinct positions, achieving the chain release and the construction of the tricyclic system. Finally, the dehydration reaction completes the biosynthesis to yield aspcandine. The sequence is that of Kynurenine 3-monooxygenase acdD from Aspergillus candidus.